A 729-amino-acid chain; its full sequence is Catalase-peroxidase 1 (729 aa).

The segment at residues 98–226 (WHSAGSYRIA…LAAVMMGLIY (129 aa)) is a cross-link (tryptophyl-tyrosyl-methioninium (Trp-Tyr) (with M-252)). H99 acts as the Proton acceptor in catalysis. Residues 226–252 (YVNPEGVDGNPDPLRTAKDIRETFARM) constitute a cross-link (tryptophyl-tyrosyl-methioninium (Tyr-Met) (with W-98)). H267 is a binding site for heme b.

This sequence belongs to the peroxidase family. Peroxidase/catalase subfamily. In terms of assembly, homodimer or homotetramer. Heme b serves as cofactor. In terms of processing, formation of the three residue Trp-Tyr-Met cross-link is important for the catalase, but not the peroxidase activity of the enzyme.

The enzyme catalyses H2O2 + AH2 = A + 2 H2O. The catalysed reaction is 2 H2O2 = O2 + 2 H2O. Its function is as follows. Bifunctional enzyme with both catalase and broad-spectrum peroxidase activity. The polypeptide is Catalase-peroxidase 1 (Cellvibrio japonicus (strain Ueda107) (Pseudomonas fluorescens subsp. cellulosa)).